The primary structure comprises 367 residues: Alginate lyase (367 aa).

A signal peptide spans 1-27 (MKTSHLIRIALPGALAAALLASQVSQA). Substrate is bound by residues 65–66 (SK), 138–139 (HT), and Tyr-256.

This sequence belongs to the polysaccharide lyase 5 family.

The protein resides in the periplasm. The catalysed reaction is Eliminative cleavage of alginate to give oligosaccharides with 4-deoxy-alpha-L-erythro-hex-4-enuronosyl groups at their non-reducing ends and beta-D-mannuronate at their reducing end.. Its function is as follows. Catalyzes the depolymerization of alginate by cleaving the beta-1,4 glycosidic bond between two adjacent sugar residues via a beta-elimination mechanism. May serve to degrade mislocalized alginate that is trapped in the periplasmic space. Acts preferentially on non-acetylated alginate or its precursor mannuronan. Is able to catalyze cleavage adjacent to either mannuronate or guluronate residues in alginate. Exhaustive digestion of alginate by AlgL generates dimeric and trimeric products. In addition to its enzymatic function, AlgL appears to be required for alginate export, maybe as part of a multi-protein alginate-secretion complex. In Pseudomonas aeruginosa (strain ATCC 15692 / DSM 22644 / CIP 104116 / JCM 14847 / LMG 12228 / 1C / PRS 101 / PAO1), this protein is Alginate lyase.